A 155-amino-acid polypeptide reads, in one-letter code: UBA-like domain-containing protein 1 (155 aa).

The segment at Lys-81–Arg-155 is disordered. The span at Ser-83–Thr-96 shows a compositional bias: low complexity. Residues Ala-112 to Thr-127 show a composition bias toward polar residues. Residues Gln-139–Arg-155 are compositionally biased toward low complexity.

It belongs to the UBALD family.

The protein is UBA-like domain-containing protein 1 (ubald1) of Danio rerio (Zebrafish).